We begin with the raw amino-acid sequence, 183 residues long: Ribosome-binding factor A (183 aa).

The segment at 132 to 183 (PAGEADPYRDNGSVAQSPAPGGLGIRTSDGPEAVEAPLTCGGDTGDDDRPKE) is disordered.

It belongs to the RbfA family. In terms of assembly, monomer. Binds 30S ribosomal subunits, but not 50S ribosomal subunits or 70S ribosomes.

Its subcellular location is the cytoplasm. Functionally, one of several proteins that assist in the late maturation steps of the functional core of the 30S ribosomal subunit. Associates with free 30S ribosomal subunits (but not with 30S subunits that are part of 70S ribosomes or polysomes). Required for efficient processing of 16S rRNA. May interact with the 5'-terminal helix region of 16S rRNA. In Mycobacterium tuberculosis (strain ATCC 25177 / H37Ra), this protein is Ribosome-binding factor A.